We begin with the raw amino-acid sequence, 188 residues long: HTH-type transcriptional regulator Mb3439c (188 aa).

An HTH tetR-type domain is found at 17–77 (EEVAAAILQA…AVLDHLGTKL (61 aa)). A DNA-binding region (H-T-H motif) is located at residues 40 to 59 (SIRDIAARSKVNHGLVFRHF).

Its function is as follows. Negatively regulates the expression of sulfate ester dioxygenase Mb3440 and its own expression. The polypeptide is HTH-type transcriptional regulator Mb3439c (Mycobacterium bovis (strain ATCC BAA-935 / AF2122/97)).